The sequence spans 302 residues: Ornithine carbamoyltransferase (302 aa).

Residues 47–50, Gln-74, Arg-98, and 125–128 contribute to the carbamoyl phosphate site; these read STRT and HPCQ. L-ornithine is bound by residues Asn-156, Asp-220, and 224–225; that span reads SM. Carbamoyl phosphate contacts are provided by residues 260–261 and Arg-288; that span reads CL.

The protein belongs to the aspartate/ornithine carbamoyltransferase superfamily. OTCase family.

It is found in the cytoplasm. The catalysed reaction is carbamoyl phosphate + L-ornithine = L-citrulline + phosphate + H(+). It functions in the pathway amino-acid biosynthesis; L-arginine biosynthesis; L-arginine from L-ornithine and carbamoyl phosphate: step 1/3. Reversibly catalyzes the transfer of the carbamoyl group from carbamoyl phosphate (CP) to the N(epsilon) atom of ornithine (ORN) to produce L-citrulline. This chain is Ornithine carbamoyltransferase, found in Methanosphaera stadtmanae (strain ATCC 43021 / DSM 3091 / JCM 11832 / MCB-3).